The following is a 421-amino-acid chain: Testin (421 aa).

The 108-residue stretch at 92 to 199 (MILTNPVAAK…GDVKLPCEMD (108 aa)) folds into the PET domain. The segment at 133 to 164 (EKQPVAGSEGAQYRKKQLAKQLPAHDQDPSKC) is disordered. A compositionally biased stretch (basic and acidic residues) spans 155-164 (PAHDQDPSKC). LIM zinc-binding domains are found at residues 234-297 (YFCY…CDSE), 299-359 (PRCA…NHAV), and 362-421 (QGCH…KMMS).

This sequence belongs to the prickle / espinas / testin family. As to quaternary structure, interacts via LIM domain 1 with ZYX. Interacts (via LIM domain 3) with ENAH and VASP. Interacts with ALKBH4, talin, actin, alpha-actinin, GRIP1 and PXN. Interacts (via LIM domain 2) with ACTL7A (via N-terminus). Heterodimer with ACTL7A; the heterodimer interacts with ENAH to form a heterotrimer.

It localises to the cytoplasm. It is found in the cell junction. The protein resides in the focal adhesion. Scaffold protein that may play a role in cell adhesion, cell spreading and in the reorganization of the actin cytoskeleton. Plays a role in the regulation of cell proliferation. May act as a tumor suppressor. The sequence is that of Testin (TES) from Plecturocebus moloch (Dusky titi monkey).